The sequence spans 124 residues: Fluoride-specific ion channel FluC (124 aa).

Helical transmembrane passes span 4–24, 32–52, 68–88, and 101–121; these read ILAI…LAGG, AFPW…GLIM, GLTI…YETF, and LNVL…IMAA. Residues glycine 75 and threonine 78 each contribute to the Na(+) site.

The protein belongs to the fluoride channel Fluc/FEX (TC 1.A.43) family.

The protein localises to the cell inner membrane. The catalysed reaction is fluoride(in) = fluoride(out). Na(+) is not transported, but it plays an essential structural role and its presence is essential for fluoride channel function. Fluoride-specific ion channel. Important for reducing fluoride concentration in the cell, thus reducing its toxicity. This is Fluoride-specific ion channel FluC from Geobacter sulfurreducens (strain ATCC 51573 / DSM 12127 / PCA).